The following is a 113-amino-acid chain: Small ribosomal subunit protein bS6 (113 aa).

It belongs to the bacterial ribosomal protein bS6 family.

Functionally, binds together with bS18 to 16S ribosomal RNA. This is Small ribosomal subunit protein bS6 from Flavobacterium psychrophilum (strain ATCC 49511 / DSM 21280 / CIP 103535 / JIP02/86).